A 455-amino-acid chain; its full sequence is UDP-glycosyltransferase 79B2 (455 aa).

Residues S266, 325 to 327, 342 to 350, and 364 to 367 each bind UDP-alpha-D-glucose; these read VQQ, HCGFGSMWE, and LGDQ.

This sequence belongs to the UDP-glycosyltransferase family.

The protein is UDP-glycosyltransferase 79B2 (UGT79B2) of Arabidopsis thaliana (Mouse-ear cress).